Here is a 147-residue protein sequence, read N- to C-terminus: Large ribosomal subunit protein bL9 (147 aa).

This sequence belongs to the bacterial ribosomal protein bL9 family.

In terms of biological role, binds to the 23S rRNA. The protein is Large ribosomal subunit protein bL9 of Nitratiruptor sp. (strain SB155-2).